The sequence spans 279 residues: tRNA (guanine-N(1)-)-methyltransferase (279 aa).

S-adenosyl-L-methionine contacts are provided by residues glycine 117 and 141–146; that span reads LGDYVL. The disordered stretch occupies residues 256 to 279; it reads WTPDGSGFRAGGDPVADSSDTNEP.

It belongs to the RNA methyltransferase TrmD family. In terms of assembly, homodimer.

It localises to the cytoplasm. It carries out the reaction guanosine(37) in tRNA + S-adenosyl-L-methionine = N(1)-methylguanosine(37) in tRNA + S-adenosyl-L-homocysteine + H(+). In terms of biological role, specifically methylates guanosine-37 in various tRNAs. The protein is tRNA (guanine-N(1)-)-methyltransferase of Kineococcus radiotolerans (strain ATCC BAA-149 / DSM 14245 / SRS30216).